A 131-amino-acid chain; its full sequence is Phosphoribosyl-AMP cyclohydrolase (131 aa).

D80 lines the Mg(2+) pocket. Residue C81 coordinates Zn(2+). Residues D82 and D84 each coordinate Mg(2+). C98 and C105 together coordinate Zn(2+).

It belongs to the PRA-CH family. As to quaternary structure, homodimer. It depends on Mg(2+) as a cofactor. Zn(2+) serves as cofactor.

The protein resides in the cytoplasm. The catalysed reaction is 1-(5-phospho-beta-D-ribosyl)-5'-AMP + H2O = 1-(5-phospho-beta-D-ribosyl)-5-[(5-phospho-beta-D-ribosylamino)methylideneamino]imidazole-4-carboxamide. Its pathway is amino-acid biosynthesis; L-histidine biosynthesis; L-histidine from 5-phospho-alpha-D-ribose 1-diphosphate: step 3/9. Functionally, catalyzes the hydrolysis of the adenine ring of phosphoribosyl-AMP. The chain is Phosphoribosyl-AMP cyclohydrolase from Azoarcus sp. (strain BH72).